Here is a 242-residue protein sequence, read N- to C-terminus: 3-deoxy-manno-octulosonate cytidylyltransferase (242 aa).

It belongs to the KdsB family.

The protein localises to the cytoplasm. It catalyses the reaction 3-deoxy-alpha-D-manno-oct-2-ulosonate + CTP = CMP-3-deoxy-beta-D-manno-octulosonate + diphosphate. Its pathway is nucleotide-sugar biosynthesis; CMP-3-deoxy-D-manno-octulosonate biosynthesis; CMP-3-deoxy-D-manno-octulosonate from 3-deoxy-D-manno-octulosonate and CTP: step 1/1. It functions in the pathway bacterial outer membrane biogenesis; lipopolysaccharide biosynthesis. Activates KDO (a required 8-carbon sugar) for incorporation into bacterial lipopolysaccharide in Gram-negative bacteria. The sequence is that of 3-deoxy-manno-octulosonate cytidylyltransferase from Anaeromyxobacter dehalogenans (strain 2CP-C).